We begin with the raw amino-acid sequence, 30 residues long: Cyclotide mden-I (30 aa).

Residues 1-30 (GIPCGESCVYIPCITTAIGCSCKNKVCYRN) constitute a cross-link (cyclopeptide (Gly-Asn)). 3 cysteine pairs are disulfide-bonded: C4/C20, C8/C22, and C13/C27.

This sequence belongs to the cyclotide family. Bracelet subfamily. Post-translationally, this is a cyclic peptide.

Its function is as follows. Probably participates in a plant defense mechanism. This Melicytus dentatus (Tree violet) protein is Cyclotide mden-I.